The following is a 222-amino-acid chain: MRQEATCSLVLTQDAQHRKNQPPLAEEDDDRDHTDDAMPPPCSILLRQEEGEATAAAAGEGLLVPPLNFAMVDHGVYRSGFPDISNLPFVESLRLRSVLCLCPEPYPEANQEFLRAHGIRLFQFGIDGSKEPFVNIPEDRIREALKVVLDVANHPVLIHCKRGKHRTGCVVGCLRKLQRWCLTSIFDEYQRFAAAKARVSDLRFMELFDISSLKHLPASFSC.

Residues 1–14 show a composition bias toward polar residues; it reads MRQEATCSLVLTQD. Positions 1–41 are disordered; that stretch reads MRQEATCSLVLTQDAQHRKNQPPLAEEDDDRDHTDDAMPPP. Residues 68-222 form the Tyrosine-protein phosphatase domain; sequence NFAMVDHGVY…LKHLPASFSC (155 aa). A WPD loop important for active site topology region spans residues 124-136; that stretch reads FGIDGSKEPFVNI. 1D-myo-inositol hexakisphosphate contacts are provided by Asn-135, Ile-136, and Arg-140. Catalysis depends on Cys-160, which acts as the Phosphocysteine intermediate.

Belongs to the protein-tyrosine phosphatase family. Atypical dual-specificity phosphatase Siw14-like subfamily.

The protein resides in the nucleus. The protein localises to the cytoplasm. It catalyses the reaction 5-diphospho-1D-myo-inositol 1,2,3,4,6-pentakisphosphate + H2O = 1D-myo-inositol hexakisphosphate + phosphate + H(+). It carries out the reaction 1,5-bis(diphospho)-1D-myo-inositol 2,3,4,6-tetrakisphosphate + H2O = 1-diphospho-1D-myo-inositol 2,3,4,5,6-pentakisphosphate + phosphate + 2 H(+). The catalysed reaction is 3,5-bis(diphospho)-1D-myo-inositol 1,2,4,6-tetrakisphosphate + H2O = 3-diphospho-1D-myo-inositol 1,2,4,5,6-pentakisphosphate + phosphate + 2 H(+). The enzyme catalyses 6-diphospho-1D-myo-inositol pentakisphosphate + H2O = 1D-myo-inositol hexakisphosphate + phosphate + H(+). Functionally, cleaves the beta-phosphate at the 5-position of soluble inositol pyrophosphates. Has highest activity on 5-diphosphoinositol 1,2,3,4,6-pentakisphosphate (5-InsP(7)). Possesses phosphotyrosine phosphatase activity in vitro. May contribute to regulation of drought stress responses. This chain is Inositol diphosphatase DSP1, found in Oryza sativa subsp. japonica (Rice).